A 264-amino-acid polypeptide reads, in one-letter code: MFLRTVRSQAVRAAALHHTVAPALCMRPVLRTQTVAFSSTPVTLGKKKKGGKEPKAAAKAAAEEAVDEDLFMIEWNKFEDLSAKSVAAFAAKAKEIKAGNNSPDLINNIEVKISKDEVYQIKDIASVALKGGRTLSISVYDPSHTKQVTASILASDLNMNPQPQANSPQILNIPLPPPSAESRAEQQKELKALYNAFKADKKLTSGLAAIRDAFKKDHKKMADQKSIGKDVVKREDKKFEELQKAWTSKIEKEFKTVSDEIAKK.

This sequence belongs to the RRF family.

It localises to the mitochondrion. Its function is as follows. Necessary for protein synthesis in mitochondria. Functions as a ribosome recycling factor in mitochondria. The sequence is that of Ribosome-recycling factor, mitochondrial (RRF1) from Yarrowia lipolytica (strain CLIB 122 / E 150) (Yeast).